Consider the following 382-residue polypeptide: Pyrimidine monooxygenase RutA (382 aa).

FMN-binding positions include 68 to 69, asparagine 134, glutamate 143, 159 to 160, and serine 209; these read IK and RY.

It belongs to the NtaA/SnaA/DszA monooxygenase family. RutA subfamily.

It carries out the reaction uracil + FMNH2 + NADH + O2 = (Z)-3-ureidoacrylate + FMN + NAD(+) + H2O + H(+). The enzyme catalyses thymine + FMNH2 + NADH + O2 = (Z)-2-methylureidoacrylate + FMN + NAD(+) + H2O + H(+). Catalyzes the pyrimidine ring opening between N-3 and C-4 by an unusual flavin hydroperoxide-catalyzed mechanism, adding oxygen atoms in the process to yield ureidoacrylate peracid, that immediately reacts with FMN forming ureidoacrylate and FMN-N(5)-oxide. The FMN-N(5)-oxide reacts spontaneously with NADH to produce FMN. Requires the flavin reductase RutF to regenerate FMN in vivo. In Escherichia coli O81 (strain ED1a), this protein is Pyrimidine monooxygenase RutA.